A 689-amino-acid chain; its full sequence is tRNA 5-methylaminomethyl-2-thiouridine biosynthesis bifunctional protein MnmC (689 aa).

The tract at residues 1–245 (MNQRPIQTAT…KREMLTGTLP (245 aa)) is tRNA (mnm(5)s(2)U34)-methyltransferase. The tract at residues 270 to 689 (IGGGIVSALT…RSPATQESSR (420 aa)) is FAD-dependent cmnm(5)s(2)U34 oxidoreductase.

The protein in the N-terminal section; belongs to the methyltransferase superfamily. tRNA (mnm(5)s(2)U34)-methyltransferase family. In the C-terminal section; belongs to the DAO family. Requires FAD as cofactor.

It is found in the cytoplasm. It catalyses the reaction 5-aminomethyl-2-thiouridine(34) in tRNA + S-adenosyl-L-methionine = 5-methylaminomethyl-2-thiouridine(34) in tRNA + S-adenosyl-L-homocysteine + H(+). Its function is as follows. Catalyzes the last two steps in the biosynthesis of 5-methylaminomethyl-2-thiouridine (mnm(5)s(2)U) at the wobble position (U34) in tRNA. Catalyzes the FAD-dependent demodification of cmnm(5)s(2)U34 to nm(5)s(2)U34, followed by the transfer of a methyl group from S-adenosyl-L-methionine to nm(5)s(2)U34, to form mnm(5)s(2)U34. The protein is tRNA 5-methylaminomethyl-2-thiouridine biosynthesis bifunctional protein MnmC of Yersinia pseudotuberculosis serotype O:1b (strain IP 31758).